The chain runs to 1670 residues: DNA-directed RNA polymerase I subunit 1 (1670 aa).

Zn(2+) is bound by residues cysteine 79, cysteine 82, cysteine 89, histidine 92, cysteine 119, and cysteine 122. Positions 154 to 185 (ESNTPTKSKSSDESCESVVTTDSSEECEDSDV) are disordered. Residues 176–185 (SSEECEDSDV) show a composition bias toward acidic residues. 2 residues coordinate Zn(2+): cysteine 213 and cysteine 216. The disordered stretch occupies residues 255-293 (TSSVENPDGFDDSGIDALSEVEDGDKETREKSTEVAAEF). A compositionally biased stretch (acidic residues) spans 262–279 (DGFDDSGIDALSEVEDGD). Residues 280–293 (KETREKSTEVAAEF) show a composition bias toward basic and acidic residues. Aspartate 602, aspartate 604, and aspartate 606 together coordinate Mg(2+). The interval 1005 to 1017 (PQEYYFHCMAGRE) is bridging helix. The tract at residues 1318 to 1437 (TGPIAGNETD…EQSKKKRRKF (120 aa)) is disordered. 3 stretches are compositionally biased toward acidic residues: residues 1339–1354 (DDGD…DDLG), 1366–1379 (DEMD…DETN), and 1388–1399 (EDPEMDSENEDT). Basic and acidic residues predominate over residues 1415–1429 (EPQKEVKGVKNVKEQ).

Belongs to the RNA polymerase beta' chain family. As to quaternary structure, component of the RNA polymerase I (Pol I) complex consisting of at least 13 subunits.

The protein resides in the nucleus. It carries out the reaction RNA(n) + a ribonucleoside 5'-triphosphate = RNA(n+1) + diphosphate. Functionally, DNA-dependent RNA polymerase catalyzes the transcription of DNA into RNA using the four ribonucleoside triphosphates as substrates. Largest and catalytic core component of RNA polymerase I which synthesizes ribosomal RNA precursors. Forms the polymerase active center together with the second largest subunit. A single stranded DNA template strand of the promoter is positioned within the central active site cleft of Pol I. A bridging helix emanates from NRPA1 and crosses the cleft near the catalytic site and is thought to promote translocation of Pol I by acting as a ratchet that moves the RNA-DNA hybrid through the active site by switching from straight to bent conformations at each step of nucleotide addition. This chain is DNA-directed RNA polymerase I subunit 1, found in Arabidopsis thaliana (Mouse-ear cress).